The primary structure comprises 184 residues: Ras-related protein Rap-1b-like protein (184 aa).

10–18 (GSRGVGKSA) serves as a coordination point for GTP. Positions 32-40 (YDPTIEDSY) match the Effector region motif. Residues 57–61 (DTAGT), 116–119 (NKCD), and 147–149 (SAK) each bind GTP. Residue Cys181 is the site of S-geranylgeranyl cysteine attachment. A propeptide spans 182–184 (QLL) (removed in mature form).

This sequence belongs to the small GTPase superfamily. Ras family.

Its subcellular location is the cell membrane. It localises to the cytoplasm. It is found in the cytosol. It carries out the reaction GTP + H2O = GDP + phosphate + H(+). Functionally, probable GTP-binding protein with intrinsic GTPase activity. The chain is Ras-related protein Rap-1b-like protein from Homo sapiens (Human).